We begin with the raw amino-acid sequence, 344 residues long: Pyruvate dehydrogenase E1 component subunit alpha (344 aa).

The pyruvate site is built by histidine 55, tyrosine 81, arginine 82, alanine 130, isoleucine 132, aspartate 168, glycine 169, and asparagine 197. Thiamine diphosphate is bound by residues tyrosine 81, arginine 82, alanine 130, isoleucine 132, aspartate 168, glycine 169, asparagine 197, and histidine 266. Aspartate 168 is a binding site for Mg(2+). A Mg(2+)-binding site is contributed by asparagine 197.

As to quaternary structure, heterodimer of an alpha and a beta chain. It depends on thiamine diphosphate as a cofactor. Requires Mg(2+) as cofactor.

It is found in the plastid. The protein localises to the chloroplast. It carries out the reaction N(6)-[(R)-lipoyl]-L-lysyl-[protein] + pyruvate + H(+) = N(6)-[(R)-S(8)-acetyldihydrolipoyl]-L-lysyl-[protein] + CO2. Functionally, the pyruvate dehydrogenase complex catalyzes the overall conversion of pyruvate to acetyl-CoA and CO(2). It contains multiple copies of three enzymatic components: pyruvate dehydrogenase (E1), dihydrolipoamide acetyltransferase (E2) and lipoamide dehydrogenase (E3). This Porphyra purpurea (Red seaweed) protein is Pyruvate dehydrogenase E1 component subunit alpha (pdhA).